The following is a 225-amino-acid chain: MSLIQSLKLVLARPHPAARPFLLASGAAALAGRALPWRPARWLGTASGLFFGFCLYFFRDPERVPPVDTHLALAPADGHVVSVEKVVPPDSLDMGDVPVWRVATFLSVLDVHVNRMPAAGTVTRVAYHPGQFLNASLDKASELNERNALRLTLPDGRNMAVVQIAGLIARRILCDAEEGMTYEAGERFGLIRFGSRTDLYLPPGVEPLVTVGQTMVGGETVMARL.

S195 serves as the catalytic Schiff-base intermediate with substrate; via pyruvic acid. S195 carries the pyruvic acid (Ser); by autocatalysis modification.

The protein belongs to the phosphatidylserine decarboxylase family. PSD-A subfamily. In terms of assembly, heterodimer of a large membrane-associated beta subunit and a small pyruvoyl-containing alpha subunit. Pyruvate serves as cofactor. Is synthesized initially as an inactive proenzyme. Formation of the active enzyme involves a self-maturation process in which the active site pyruvoyl group is generated from an internal serine residue via an autocatalytic post-translational modification. Two non-identical subunits are generated from the proenzyme in this reaction, and the pyruvate is formed at the N-terminus of the alpha chain, which is derived from the carboxyl end of the proenzyme. The post-translation cleavage follows an unusual pathway, termed non-hydrolytic serinolysis, in which the side chain hydroxyl group of the serine supplies its oxygen atom to form the C-terminus of the beta chain, while the remainder of the serine residue undergoes an oxidative deamination to produce ammonia and the pyruvoyl prosthetic group on the alpha chain.

It localises to the cell membrane. It carries out the reaction a 1,2-diacyl-sn-glycero-3-phospho-L-serine + H(+) = a 1,2-diacyl-sn-glycero-3-phosphoethanolamine + CO2. Its pathway is phospholipid metabolism; phosphatidylethanolamine biosynthesis; phosphatidylethanolamine from CDP-diacylglycerol: step 2/2. Functionally, catalyzes the formation of phosphatidylethanolamine (PtdEtn) from phosphatidylserine (PtdSer). The polypeptide is Phosphatidylserine decarboxylase proenzyme (Gluconacetobacter diazotrophicus (strain ATCC 49037 / DSM 5601 / CCUG 37298 / CIP 103539 / LMG 7603 / PAl5)).